Consider the following 541-residue polypeptide: Chaperonin GroEL (541 aa).

ATP contacts are provided by residues 29-32 (TLGP), 86-90 (DGTTT), G413, 476-478 (NAA), and D492.

The protein belongs to the chaperonin (HSP60) family. As to quaternary structure, forms a cylinder of 14 subunits composed of two heptameric rings stacked back-to-back. Interacts with the co-chaperonin GroES.

It is found in the cytoplasm. It catalyses the reaction ATP + H2O + a folded polypeptide = ADP + phosphate + an unfolded polypeptide.. Together with its co-chaperonin GroES, plays an essential role in assisting protein folding. The GroEL-GroES system forms a nano-cage that allows encapsulation of the non-native substrate proteins and provides a physical environment optimized to promote and accelerate protein folding. This Rhodococcus hoagii (Corynebacterium equii) protein is Chaperonin GroEL.